Consider the following 507-residue polypeptide: Sugar transport protein 8 (507 aa).

The Cytoplasmic segment spans residues 1–21 (MAVVISSNGNSKSFDAKMTVY). The next 12 helical transmembrane spans lie at 22–42 (VFIC…DIGI), 79–99 (FLQL…FFAS), 116–136 (IFFL…MLII), 139–159 (ILLG…LSEI), 166–186 (GGLN…ANIV), 200–220 (IALG…LLIC), 281–301 (FVIG…AIMF), 319–339 (LSAV…IFLV), 346–366 (FLLL…GIIL), 382–402 (LVVV…WGPL), 419–439 (GFAL…QAFL), and 448–468 (GIFF…LFFV). The Cytoplasmic segment spans residues 469-507 (PETKGVSIDDMRDSVWKLHWYWKRFMLEEDEHDVEKRTD).

It belongs to the major facilitator superfamily. Sugar transporter (TC 2.A.1.1) family.

The protein resides in the membrane. Its function is as follows. Mediates an active uptake of hexoses, probably by sugar/hydrogen symport. In Arabidopsis thaliana (Mouse-ear cress), this protein is Sugar transport protein 8 (STP8).